Reading from the N-terminus, the 428-residue chain is Chaperone SurA (428 aa).

The first 19 residues, 1 to 19 (MNIWKTLLLGMLVTGSAVS), serve as a signal peptide directing secretion. 2 PpiC domains span residues 170 to 268 (SVEY…KIED) and 277 to 377 (VTEV…EVLD).

It localises to the periplasm. It carries out the reaction [protein]-peptidylproline (omega=180) = [protein]-peptidylproline (omega=0). Functionally, chaperone involved in the correct folding and assembly of outer membrane proteins. Recognizes specific patterns of aromatic residues and the orientation of their side chains, which are found more frequently in integral outer membrane proteins. May act in both early periplasmic and late outer membrane-associated steps of protein maturation. The protein is Chaperone SurA of Vibrio vulnificus (strain YJ016).